The following is a 222-amino-acid chain: N-(5'-phosphoribosyl)anthranilate isomerase (222 aa).

The protein belongs to the TrpF family.

The enzyme catalyses N-(5-phospho-beta-D-ribosyl)anthranilate = 1-(2-carboxyphenylamino)-1-deoxy-D-ribulose 5-phosphate. The protein operates within amino-acid biosynthesis; L-tryptophan biosynthesis; L-tryptophan from chorismate: step 3/5. The chain is N-(5'-phosphoribosyl)anthranilate isomerase from Rhizobium leguminosarum bv. trifolii (strain WSM2304).